A 293-amino-acid chain; its full sequence is Probable 2-(5''-triphosphoribosyl)-3'-dephosphocoenzyme-A synthase (293 aa).

This sequence belongs to the CitG/MdcB family.

The catalysed reaction is 3'-dephospho-CoA + ATP = 2'-(5''-triphospho-alpha-D-ribosyl)-3'-dephospho-CoA + adenine. Its function is as follows. Involved in the formation of 2-(5''-phosphoribosyl)-3'-dephosphocoenzyme-A, the prosthetic group of the acyl-carrier protein of the malonate decarboxylase. This Pseudomonas paraeruginosa (strain DSM 24068 / PA7) (Pseudomonas aeruginosa (strain PA7)) protein is Probable 2-(5''-triphosphoribosyl)-3'-dephosphocoenzyme-A synthase.